Here is a 141-residue protein sequence, read N- to C-terminus: Large ribosomal subunit protein uL11 (141 aa).

Belongs to the universal ribosomal protein uL11 family. Part of the ribosomal stalk of the 50S ribosomal subunit. Interacts with L10 and the large rRNA to form the base of the stalk. L10 forms an elongated spine to which L12 dimers bind in a sequential fashion forming a multimeric L10(L12)X complex. In terms of processing, one or more lysine residues are methylated.

Forms part of the ribosomal stalk which helps the ribosome interact with GTP-bound translation factors. This is Large ribosomal subunit protein uL11 from Ruegeria pomeroyi (strain ATCC 700808 / DSM 15171 / DSS-3) (Silicibacter pomeroyi).